Reading from the N-terminus, the 115-residue chain is NADH-ubiquinone oxidoreductase chain 3 (115 aa).

A run of 3 helical transmembrane segments spans residues 3-23, 55-75, and 84-104; these read LMITLLTNFTLATLLVTIAFW, FFLVAITFLLFDLEIALLLPL, and LNTMLTMALLLIFLLAVSLAY.

Belongs to the complex I subunit 3 family. As to quaternary structure, core subunit of respiratory chain NADH dehydrogenase (Complex I) which is composed of 45 different subunits. Interacts with TMEM186. Interacts with TMEM242.

The protein localises to the mitochondrion inner membrane. It catalyses the reaction a ubiquinone + NADH + 5 H(+)(in) = a ubiquinol + NAD(+) + 4 H(+)(out). Its function is as follows. Core subunit of the mitochondrial membrane respiratory chain NADH dehydrogenase (Complex I) which catalyzes electron transfer from NADH through the respiratory chain, using ubiquinone as an electron acceptor. Essential for the catalytic activity of complex I. The protein is NADH-ubiquinone oxidoreductase chain 3 of Ovis aries (Sheep).